The following is a 191-amino-acid chain: Probable GTP-binding protein EngB (191 aa).

Positions 22 to 191 (DFDHFLILGR…KLINEEFSNE (170 aa)) constitute an EngB-type G domain. GTP is bound by residues 30–37 (GRSNVGKS), 57–61 (GKTIT), 75–78 (DAPG), 142–145 (TKYD), and 172–174 (TSS). 2 residues coordinate Mg(2+): Ser37 and Thr59.

Belongs to the TRAFAC class TrmE-Era-EngA-EngB-Septin-like GTPase superfamily. EngB GTPase family. Mg(2+) is required as a cofactor.

Its function is as follows. Necessary for normal cell division and for the maintenance of normal septation. This Acholeplasma laidlawii (strain PG-8A) protein is Probable GTP-binding protein EngB.